The chain runs to 203 residues: Ran-specific GTPase-activating protein (203 aa).

Positions 1-26 (MAAAKDSHEDHDTSTENADESNHDPQ) are enriched in basic and acidic residues. The disordered stretch occupies residues 1 to 33 (MAAAKDSHEDHDTSTENADESNHDPQFEPIVSL). An N-acetylalanine modification is found at Ala2. Thr13 bears the Phosphothreonine mark. A phosphoserine mark is found at Ser21 and Ser60. A RanBD1 domain is found at 26 to 164 (QFEPIVSLPE…FEECRKEIEE (139 aa)). The residue at position 150 (Lys150) is an N6-acetyllysine; alternate. Lys150 is subject to N6-succinyllysine; alternate. Residues 163–192 (EEREKKGPGKNDNAEKVAEKLEALSVREAR) show a composition bias toward basic and acidic residues. Residues 163-203 (EEREKKGPGKNDNAEKVAEKLEALSVREAREEAEEKSEEKQ) are disordered. Lys182 bears the N6-acetyllysine mark. The residue at position 187 (Ser187) is a Phosphoserine. The span at 193–203 (EEAEEKSEEKQ) shows a compositional bias: acidic residues.

It belongs to the RANBP1 family. In terms of assembly, interacts with RAN (via C-terminus of GTP-bound form) but not with GDP-bound RAN. Identified in a complex composed of RAN, RANGAP1 and RANBP1. Identified in a complex that contains TNPO1, RAN and RANBP1. Identified in a complex that contains CSE1L, KPNA2, RAN and RANBP1. Identified in a complex with nucleotide-free RAN and RCC1.

Its function is as follows. Plays a role in RAN-dependent nucleocytoplasmic transport. Alleviates the TNPO1-dependent inhibition of RAN GTPase activity and mediates the dissociation of RAN from proteins involved in transport into the nucleus. Induces a conformation change in the complex formed by XPO1 and RAN that triggers the release of the nuclear export signal of cargo proteins. Promotes the disassembly of the complex formed by RAN and importin beta. Promotes dissociation of RAN from a complex with KPNA2 and CSE1L. Required for normal mitotic spindle assembly and normal progress through mitosis via its effect on RAN. Does not increase the RAN GTPase activity by itself, but increases GTP hydrolysis mediated by RANGAP1. Inhibits RCC1-dependent exchange of RAN-bound GDP by GTP. This Mus musculus (Mouse) protein is Ran-specific GTPase-activating protein (Ranbp1).